The following is a 275-amino-acid chain: Elongation factor Ts (275 aa).

The involved in Mg(2+) ion dislocation from EF-Tu stretch occupies residues T80–V83.

This sequence belongs to the EF-Ts family.

The protein resides in the cytoplasm. Functionally, associates with the EF-Tu.GDP complex and induces the exchange of GDP to GTP. It remains bound to the aminoacyl-tRNA.EF-Tu.GTP complex up to the GTP hydrolysis stage on the ribosome. This Clavibacter michiganensis subsp. michiganensis (strain NCPPB 382) protein is Elongation factor Ts.